Reading from the N-terminus, the 389-residue chain is Na(+)/H(+) antiporter NhaA (389 aa).

11 helical membrane-spanning segments follow: residues 14–34 (AGGILLLVAVALAMLMANSPL), 59–79 (LILWINDGLMAVFFLLIGLEV), 95–115 (SLPTFAAIGGMLVPAGVYLLF), 124–144 (AGWAIPAATDIAFALGIMALL), 154–174 (VFLLALAIIDDLGVIVIIALF), 177–197 (TDLSTISLVIASLAIAGLVGL), 213–233 (LILWVAVLKSGVHATLAGVII), 257–277 (PWSTFFILPVFAFANAGVYVG), 292–312 (IALGLMLGKPIGVMVFSYIAV), 328–348 (IAPVAAMCGIGFTMSMFIASL), and 363–383 (LGTLIGSIMAALVGYFWLSKV).

Belongs to the NhaA Na(+)/H(+) (TC 2.A.33) antiporter family.

It localises to the cell inner membrane. It catalyses the reaction Na(+)(in) + 2 H(+)(out) = Na(+)(out) + 2 H(+)(in). Its function is as follows. Na(+)/H(+) antiporter that extrudes sodium in exchange for external protons. The sequence is that of Na(+)/H(+) antiporter NhaA from Shewanella baltica (strain OS223).